The chain runs to 385 residues: UDP-N-acetylglucosamine--N-acetylmuramyl-(pentapeptide) pyrophosphoryl-undecaprenol N-acetylglucosamine transferase (385 aa).

Residues 11–13, asparagine 117, arginine 160, serine 215, and glutamine 317 each bind UDP-N-acetyl-alpha-D-glucosamine; that span reads TGG.

It belongs to the glycosyltransferase 28 family. MurG subfamily.

Its subcellular location is the cell inner membrane. The catalysed reaction is di-trans,octa-cis-undecaprenyl diphospho-N-acetyl-alpha-D-muramoyl-L-alanyl-D-glutamyl-meso-2,6-diaminopimeloyl-D-alanyl-D-alanine + UDP-N-acetyl-alpha-D-glucosamine = di-trans,octa-cis-undecaprenyl diphospho-[N-acetyl-alpha-D-glucosaminyl-(1-&gt;4)]-N-acetyl-alpha-D-muramoyl-L-alanyl-D-glutamyl-meso-2,6-diaminopimeloyl-D-alanyl-D-alanine + UDP + H(+). The protein operates within cell wall biogenesis; peptidoglycan biosynthesis. Cell wall formation. Catalyzes the transfer of a GlcNAc subunit on undecaprenyl-pyrophosphoryl-MurNAc-pentapeptide (lipid intermediate I) to form undecaprenyl-pyrophosphoryl-MurNAc-(pentapeptide)GlcNAc (lipid intermediate II). The sequence is that of UDP-N-acetylglucosamine--N-acetylmuramyl-(pentapeptide) pyrophosphoryl-undecaprenol N-acetylglucosamine transferase from Rickettsia typhi (strain ATCC VR-144 / Wilmington).